Reading from the N-terminus, the 254-residue chain is Reaction center protein L chain (254 aa).

A run of 3 helical transmembrane segments spans residues 10–32 (FFGV…GAAL), 60–88 (GGLW…SRKL), and 93–115 (HVPA…RPLL). Residues His-130 and His-150 each coordinate (7R,8Z)-bacteriochlorophyll b. Residues 148-175 (PMHMVAVTLFFTTTLALALHGSLVLAAI) traverse the membrane as a helical segment. His-167 provides a ligand contact to Fe cation. An a ubiquinone-binding site is contributed by Phe-193. A helical transmembrane segment spans residues 202–227 (GTLGIHRLGLFLALGAGFASATCILL). Position 207 (His-207) interacts with Fe cation.

Belongs to the reaction center PufL/M/PsbA/D family. Reaction center is composed of four bacteriochlorophylls, two bacteriopheophytins, two ubiquinones, one iron, and two highly hydrophobic polypeptide chains (designated L and M).

The protein localises to the cell inner membrane. The reaction center is a membrane-bound complex that mediates the initial photochemical event in the electron transfer process of photosynthesis. The protein is Reaction center protein L chain (pufL) of Acidiphilium organovorum.